The sequence spans 248 residues: Probable transcriptional regulatory protein PSPPH_3775 (248 aa).

Belongs to the TACO1 family.

It localises to the cytoplasm. In Pseudomonas savastanoi pv. phaseolicola (strain 1448A / Race 6) (Pseudomonas syringae pv. phaseolicola (strain 1448A / Race 6)), this protein is Probable transcriptional regulatory protein PSPPH_3775.